The following is a 502-amino-acid chain: Glycerol kinase (502 aa).

Thr13 serves as a coordination point for ADP. Residues Thr13, Thr14, and Ser15 each coordinate ATP. Sn-glycerol 3-phosphate is bound at residue Thr13. Arg17 contacts ADP. Residues Arg83, Glu84, Tyr136, and Asp246 each coordinate sn-glycerol 3-phosphate. Glycerol is bound by residues Arg83, Glu84, Tyr136, Asp246, and Gln247. ADP is bound by residues Thr268 and Gly311. ATP-binding residues include Thr268, Gly311, Gln315, and Gly412. The ADP site is built by Gly412 and Asn416.

This sequence belongs to the FGGY kinase family.

It catalyses the reaction glycerol + ATP = sn-glycerol 3-phosphate + ADP + H(+). It functions in the pathway polyol metabolism; glycerol degradation via glycerol kinase pathway; sn-glycerol 3-phosphate from glycerol: step 1/1. With respect to regulation, inhibited by fructose 1,6-bisphosphate (FBP). In terms of biological role, key enzyme in the regulation of glycerol uptake and metabolism. Catalyzes the phosphorylation of glycerol to yield sn-glycerol 3-phosphate. This chain is Glycerol kinase, found in Francisella tularensis subsp. holarctica (strain FTNF002-00 / FTA).